Reading from the N-terminus, the 275-residue chain is Secreted RxLR effector protein 153 (275 aa).

Positions 1 to 27 (MRNRAFLFGLFFIEYACLVLFAAPTRA) are cleaved as a signal peptide. Asn45 is a glycosylation site (N-linked (GlcNAc...) asparagine). The RxLR-dEER motif lies at 48-63 (RTLQADDSKRISAEER).

Belongs to the RxLR effector family.

It localises to the secreted. It is found in the host cell membrane. Its function is as follows. Secreted effector that completely suppresses the host cell death induced by cell death-inducing proteins. In Plasmopara viticola (Downy mildew of grapevine), this protein is Secreted RxLR effector protein 153.